The sequence spans 299 residues: Probable lipid kinase YegS-like (299 aa).

The DAGKc domain maps to 2-133 (EKNPITLLIL…IDIAKVNDGH (132 aa)). ATP-binding positions include T40, 66-72 (GDGTVNE), and T95. L215, D218, and L220 together coordinate Mg(2+). The active-site Proton acceptor is E271.

The protein belongs to the diacylglycerol/lipid kinase family. YegS lipid kinase subfamily. The cofactor is Mg(2+). It depends on Ca(2+) as a cofactor.

It is found in the cytoplasm. Its function is as follows. Probably phosphorylates lipids; the in vivo substrate is unknown. In Pectobacterium atrosepticum (strain SCRI 1043 / ATCC BAA-672) (Erwinia carotovora subsp. atroseptica), this protein is Probable lipid kinase YegS-like.